The chain runs to 146 residues: Hemoglobin subunit delta (146 aa).

One can recognise a Globin domain in the interval 2-146 (HLTGDEKSAV…VATALAHKYH (145 aa)). Serine 50 bears the Phosphoserine mark. Positions 63 and 92 each coordinate heme b.

Belongs to the globin family. In terms of assembly, heterotetramer of two delta chains and two alpha chains. As to expression, red blood cells.

The polypeptide is Hemoglobin subunit delta (HBD) (Aotus trivirgatus (Three-striped night monkey)).